The following is a 368-amino-acid chain: Reverse transcriptase-like protein (368 aa).

The Reverse transcriptase domain occupies 91-318 (TRELTVPYWY…SELNWLGHKV (228 aa)).

The protein localises to the mitochondrion. This is Reverse transcriptase-like protein (RTL) from Chlamydomonas reinhardtii (Chlamydomonas smithii).